Reading from the N-terminus, the 256-residue chain is Thiazole synthase (256 aa).

K99 acts as the Schiff-base intermediate with DXP in catalysis. Residues G160, A186–G187, and N208–T209 contribute to the 1-deoxy-D-xylulose 5-phosphate site.

Belongs to the ThiG family. Homotetramer. Forms heterodimers with either ThiH or ThiS.

The protein localises to the cytoplasm. The enzyme catalyses [ThiS sulfur-carrier protein]-C-terminal-Gly-aminoethanethioate + 2-iminoacetate + 1-deoxy-D-xylulose 5-phosphate = [ThiS sulfur-carrier protein]-C-terminal Gly-Gly + 2-[(2R,5Z)-2-carboxy-4-methylthiazol-5(2H)-ylidene]ethyl phosphate + 2 H2O + H(+). It participates in cofactor biosynthesis; thiamine diphosphate biosynthesis. Functionally, catalyzes the rearrangement of 1-deoxy-D-xylulose 5-phosphate (DXP) to produce the thiazole phosphate moiety of thiamine. Sulfur is provided by the thiocarboxylate moiety of the carrier protein ThiS. In vitro, sulfur can be provided by H(2)S. This chain is Thiazole synthase, found in Neorickettsia sennetsu (strain ATCC VR-367 / Miyayama) (Ehrlichia sennetsu).